Consider the following 240-residue polypeptide: Adenylate dimethylallyltransferase (240 aa).

The protein belongs to the isopentenyl transferase family.

It catalyses the reaction dimethylallyl diphosphate + AMP = N(6)-(dimethylallyl)adenosine 5'-phosphate + diphosphate. Functionally, transfers dimethylallyl groups to AMP as part of the biosynthesis of cytokinin phytohormones. The polypeptide is Adenylate dimethylallyltransferase (izt) (Agrobacterium fabrum (strain C58 / ATCC 33970) (Agrobacterium tumefaciens (strain C58))).